The sequence spans 248 residues: UDP-2,3-diacylglucosamine hydrolase (248 aa).

5 residues coordinate Mn(2+): Asp-8, His-10, Asp-41, Asn-79, and His-114. 79–80 (NR) contacts substrate. Asp-122, Asn-164, Arg-167, and His-195 together coordinate substrate. Residues His-195 and His-197 each coordinate Mn(2+).

Belongs to the LpxH family. Requires Mn(2+) as cofactor.

The protein localises to the cell inner membrane. It catalyses the reaction UDP-2-N,3-O-bis[(3R)-3-hydroxytetradecanoyl]-alpha-D-glucosamine + H2O = 2-N,3-O-bis[(3R)-3-hydroxytetradecanoyl]-alpha-D-glucosaminyl 1-phosphate + UMP + 2 H(+). The protein operates within glycolipid biosynthesis; lipid IV(A) biosynthesis; lipid IV(A) from (3R)-3-hydroxytetradecanoyl-[acyl-carrier-protein] and UDP-N-acetyl-alpha-D-glucosamine: step 4/6. Functionally, hydrolyzes the pyrophosphate bond of UDP-2,3-diacylglucosamine to yield 2,3-diacylglucosamine 1-phosphate (lipid X) and UMP by catalyzing the attack of water at the alpha-P atom. Involved in the biosynthesis of lipid A, a phosphorylated glycolipid that anchors the lipopolysaccharide to the outer membrane of the cell. The sequence is that of UDP-2,3-diacylglucosamine hydrolase from Wigglesworthia glossinidia brevipalpis.